The sequence spans 228 residues: Thermonuclease (228 aa).

Residues 1–23 (MTEYLLSAGICMAIVSILLIGMA) form the signal peptide. A propeptide spanning residues 24-60 (ISNVSKEQYAKRFFFFATSCLVLTLVVASSLSSSANA) is cleaved from the precursor. Asp-100 is a Ca(2+) binding site. Arg-114 is an active-site residue. Ca(2+) contacts are provided by Asp-119 and Thr-120. Catalysis depends on residues Glu-122 and Arg-166.

The protein belongs to the thermonuclease family. Ca(2+) serves as cofactor.

It is found in the secreted. The enzyme catalyses Endonucleolytic cleavage to nucleoside 3'-phosphates and 3'-phosphooligonucleotide end-products.. Its function is as follows. Enzyme that catalyzes the hydrolysis of both DNA and RNA at the 5' position of the phosphodiester bond. The sequence is that of Thermonuclease (nuc) from Staphylococcus aureus (strain MRSA252).